The primary structure comprises 439 residues: Protein PHYTOCHROME KINASE SUBSTRATE 1 (439 aa).

The span at 1–14 (MVTLTPSSASTPKT) shows a compositional bias: polar residues. Disordered stretches follow at residues 1–22 (MVTLTPSSASTPKTSFDFMKNN), 54–80 (KTLNMSINPKQEEFGDEKKMVKKAPED), and 100–139 (QGSSVLSLTNPEVERTVVDSKQSAKKSTGTPSVRSESSWN). The segment covering 63–79 (KQEEFGDEKKMVKKAPE) has biased composition (basic and acidic residues). Polar residues-rich tracts occupy residues 100 to 109 (QGSSVLSLTN) and 118 to 139 (DSKQSAKKSTGTPSVRSESSWN). 2 positions are modified to phosphoserine: Ser-238 and Ser-244. Disordered stretches follow at residues 259–311 (LPLP…PTCY) and 355–439 (TAKS…LYSQ). The segment covering 412 to 421 (TKPKSFETRR) has biased composition (basic and acidic residues). Over residues 424 to 439 (SNSSISHTQSSLLYSQ) the composition is skewed to low complexity.

This sequence belongs to the PKS family. Interacts with PKS2, RPT3, PHOT1, PHOT2 and the C-termini of both phytochromes A (phyA) and B (phyB). Binds both spectral forms of phytochrome, Pr and Pfr. Post-translationally, phosphorylated on Ser and to a lower extent on Thr by phytochromes. Phosphorylation is stimulated twofold by red light. Expressed in young seedlings in both darkness and light. Moderate in leaves and very low in roots and flowers. Expressed in the elongation zone of the root and hypocotyl.

It is found in the cell membrane. Its function is as follows. May be responsible for light-regulated cytoplasmic sequestration of phytochromes or may be a negative regulator of phytochrome B signaling. Component of the network that modulates the very low-fluence response (VLFR) branch of phyA signaling. Acts positively in PHOT1 signaling. Regulates phytochrome-mediated photomorphogenesis and hypocotyl phototropism. Involved in the control of leaf flattening and leaf positioning. Promotes negative root phototropism and negatively regulates root gravitropism. May act by controlling auxin homeostasis. The chain is Protein PHYTOCHROME KINASE SUBSTRATE 1 (PKS1) from Arabidopsis thaliana (Mouse-ear cress).